A 356-amino-acid polypeptide reads, in one-letter code: Tyrosinase P (356 aa).

An N-terminal signal peptide occupies residues 1–19 (MGFYRNLVLVAASCTQALG). A glycan (N-linked (GlcNAc...) asparagine) is linked at Asn81. Residues His87 and His96 each coordinate Cu cation. Asn148 and Asn193 each carry an N-linked (GlcNAc...) asparagine glycan. His203 lines the Cu cation pocket. A glycan (N-linked (GlcNAc...) asparagine) is linked at Asn226. Residues His263 and His286 each contribute to the Cu cation site. The N-linked (GlcNAc...) asparagine glycan is linked to Asn309.

The protein belongs to the tyrosinase family. Requires Cu(2+) as cofactor. In terms of processing, glycosylated.

Its subcellular location is the endoplasmic reticulum lumen. The protein resides in the golgi apparatus lumen. The enzyme catalyses aspulvinone E + O2 = (5Z)-3-(3,4-dihydroxyphenyl)-5-[(3,4-dihydroxyphenyl)methylidene]-5-oxo-2,5-dihydrofuran-3-olate. The catalysed reaction is aspulvinone E + O2 = (2Z)-2-[(3,4-dioxocyclohexa-1,5-dien-1-yl)methylidene]-4-(4-hydroxyphenyl)-5-oxo-2,5-dihydrofuran-3-olate + H2O. With respect to regulation, activity is inhibited by the presence of dithiothreitol (DTT). Its function is as follows. Tyrosinase; part of the gene cluster that mediates the biosynthesis of Asp-melanin, a pigment that confers resistance against UV light and hampers phagocytosis by soil amoeba. The nonribosomal peptide synthase melA converts 4-hydroxyphenylpyruvate (4-HPPA) to aspulvinone E. The tyrosinase tyrP then performs hydroxylations of both aromatic moieties of aspulvinone E. The product of tyrP is highly unstable, and, due to the high reactivity of methides and ortho-diquinones, the polymeric Asp-melanin forms spontaneously. This Aspergillus terreus protein is Tyrosinase P (tyrP).